A 492-amino-acid polypeptide reads, in one-letter code: Ribulose bisphosphate carboxylase large chain (492 aa).

Residues Asn131 and Thr181 each contribute to the substrate site. The active-site Proton acceptor is the Lys183. Lys185 serves as a coordination point for substrate. 3 residues coordinate Mg(2+): Lys209, Asp211, and Glu212. An N6-carboxylysine modification is found at Lys209. The active-site Proton acceptor is the His301. Arg302, His334, and Ser386 together coordinate substrate.

It belongs to the RuBisCO large chain family. Type I subfamily. As to quaternary structure, heterohexadecamer of 8 large chains and 8 small chains. The cofactor is Mg(2+).

The enzyme catalyses 2 (2R)-3-phosphoglycerate + 2 H(+) = D-ribulose 1,5-bisphosphate + CO2 + H2O. It carries out the reaction D-ribulose 1,5-bisphosphate + O2 = 2-phosphoglycolate + (2R)-3-phosphoglycerate + 2 H(+). Functionally, ruBisCO catalyzes two reactions: the carboxylation of D-ribulose 1,5-bisphosphate, the primary event in carbon dioxide fixation, as well as the oxidative fragmentation of the pentose substrate. Both reactions occur simultaneously and in competition at the same active site. This is Ribulose bisphosphate carboxylase large chain from Nitrosococcus oceani (strain ATCC 19707 / BCRC 17464 / JCM 30415 / NCIMB 11848 / C-107).